The primary structure comprises 459 residues: Cysteine--tRNA ligase (459 aa).

Residue C28 participates in Zn(2+) binding. Positions 30-40 (ITIYDLCHIGH) match the 'HIGH' region motif. Zn(2+)-binding residues include C209, H234, and E238. Residues 266–270 (KMSKS) carry the 'KMSKS' region motif. K269 contributes to the ATP binding site.

This sequence belongs to the class-I aminoacyl-tRNA synthetase family. In terms of assembly, monomer. The cofactor is Zn(2+).

The protein resides in the cytoplasm. It carries out the reaction tRNA(Cys) + L-cysteine + ATP = L-cysteinyl-tRNA(Cys) + AMP + diphosphate. The protein is Cysteine--tRNA ligase of Shewanella sediminis (strain HAW-EB3).